Reading from the N-terminus, the 1069-residue chain is Carbamoyl phosphate synthase large chain (1069 aa).

A carboxyphosphate synthetic domain region spans residues 1–401; the sequence is MPLNKDIKRV…AFLKGIRSLE (401 aa). Residues Arg-129, Arg-169, Gly-175, Gly-176, Lys-208, Val-210, Glu-215, Gly-241, Ile-242, His-243, Gln-284, and Glu-298 each contribute to the ATP site. One can recognise an ATP-grasp 1 domain in the interval 133-327; sequence RDMMNRIGEP…IAKLAAKIAL (195 aa). Positions 284, 298, and 300 each coordinate Mg(2+). The Mn(2+) site is built by Gln-284, Glu-298, and Asn-300. The interval 402 to 549 is oligomerization domain; that stretch reads IGKYSLDHKK…YSTYEQYDEV (148 aa). The tract at residues 550–932 is carbamoyl phosphate synthetic domain; that stretch reads EVSNRRKVIV…ALYKGFVGAN (383 aa). The ATP-grasp 2 domain maps to 674–864; the sequence is DELLERLDIS…IVDIATQVML (191 aa). Residues Arg-710, Lys-749, Leu-751, Glu-755, Gly-780, Val-781, His-782, Ser-783, Gln-823, and Glu-835 each coordinate ATP. Mg(2+) contacts are provided by Gln-823, Glu-835, and Asn-837. Residues Gln-823, Glu-835, and Asn-837 each contribute to the Mn(2+) site. Positions 932–1069 constitute an MGS-like domain; the sequence is NMYPSKEKGK…KDLEVFDITK (138 aa). The allosteric domain stretch occupies residues 933 to 1069; the sequence is MYPSKEKGKI…KDLEVFDITK (137 aa).

It belongs to the CarB family. Composed of two chains; the small (or glutamine) chain promotes the hydrolysis of glutamine to ammonia, which is used by the large (or ammonia) chain to synthesize carbamoyl phosphate. Tetramer of heterodimers (alpha,beta)4. Requires Mg(2+) as cofactor. Mn(2+) is required as a cofactor.

The enzyme catalyses hydrogencarbonate + L-glutamine + 2 ATP + H2O = carbamoyl phosphate + L-glutamate + 2 ADP + phosphate + 2 H(+). It carries out the reaction hydrogencarbonate + NH4(+) + 2 ATP = carbamoyl phosphate + 2 ADP + phosphate + 2 H(+). It participates in amino-acid biosynthesis; L-arginine biosynthesis; carbamoyl phosphate from bicarbonate: step 1/1. It functions in the pathway pyrimidine metabolism; UMP biosynthesis via de novo pathway; (S)-dihydroorotate from bicarbonate: step 1/3. In terms of biological role, large subunit of the glutamine-dependent carbamoyl phosphate synthetase (CPSase). CPSase catalyzes the formation of carbamoyl phosphate from the ammonia moiety of glutamine, carbonate, and phosphate donated by ATP, constituting the first step of 2 biosynthetic pathways, one leading to arginine and/or urea and the other to pyrimidine nucleotides. The large subunit (synthetase) binds the substrates ammonia (free or transferred from glutamine from the small subunit), hydrogencarbonate and ATP and carries out an ATP-coupled ligase reaction, activating hydrogencarbonate by forming carboxy phosphate which reacts with ammonia to form carbamoyl phosphate. In Clostridium botulinum (strain Alaska E43 / Type E3), this protein is Carbamoyl phosphate synthase large chain.